The sequence spans 196 residues: dTTP/UTP pyrophosphatase (196 aa).

Catalysis depends on Asp-76, which acts as the Proton acceptor.

Belongs to the Maf family. YhdE subfamily. A divalent metal cation is required as a cofactor.

The protein localises to the cytoplasm. The catalysed reaction is dTTP + H2O = dTMP + diphosphate + H(+). It catalyses the reaction UTP + H2O = UMP + diphosphate + H(+). Its function is as follows. Nucleoside triphosphate pyrophosphatase that hydrolyzes dTTP and UTP. May have a dual role in cell division arrest and in preventing the incorporation of modified nucleotides into cellular nucleic acids. This Chlorobium chlorochromatii (strain CaD3) protein is dTTP/UTP pyrophosphatase.